The chain runs to 203 residues: MMKLGLYLTLLFLSVWTVSGEPFKCTNICGKGAIIIAGVAYCCPQGYKPMIRRKMEDAFMATDCDCLFMMPAGQGMYAQYPQAPNQGSFIVQQPPQAPAVAVAPAAATVQVVAPAPTVVAAPPAAPPPPPPVVKVAPPAPRLPTYKPMYQMIRQQPMRQQRTWYHRPAPTYAAPTKSTKPKHEFFKFLDDFLSKQGYRGGNRG.

The first 20 residues, 1–20 (MMKLGLYLTLLFLSVWTVSG), serve as a signal peptide directing secretion.

In terms of tissue distribution, component of the acid-insoluble and acid-soluble organic matrix of calcified layers of the shell (at protein level).

It is found in the secreted. This Lottia gigantea (Giant owl limpet) protein is Proline-rich protein 1.